We begin with the raw amino-acid sequence, 340 residues long: Ketol-acid reductoisomerase (NADP(+)) (340 aa).

The region spanning 1–182 (MRVYYDRDCD…GGGRSGIIET (182 aa)) is the KARI N-terminal Rossmann domain. NADP(+) contacts are provided by residues 24 to 27 (YGSQ), arginine 48, serine 51, serine 53, and 83 to 86 (DELQ). Residue histidine 108 is part of the active site. Residue glycine 134 participates in NADP(+) binding. Positions 183–329 (NFRQECETDL…EKLRGMMPWI (147 aa)) constitute a KARI C-terminal knotted domain. The Mg(2+) site is built by aspartate 191, glutamate 195, glutamate 227, and glutamate 231. Serine 252 is a binding site for substrate.

This sequence belongs to the ketol-acid reductoisomerase family. The cofactor is Mg(2+).

The catalysed reaction is (2R)-2,3-dihydroxy-3-methylbutanoate + NADP(+) = (2S)-2-acetolactate + NADPH + H(+). The enzyme catalyses (2R,3R)-2,3-dihydroxy-3-methylpentanoate + NADP(+) = (S)-2-ethyl-2-hydroxy-3-oxobutanoate + NADPH + H(+). It participates in amino-acid biosynthesis; L-isoleucine biosynthesis; L-isoleucine from 2-oxobutanoate: step 2/4. Its pathway is amino-acid biosynthesis; L-valine biosynthesis; L-valine from pyruvate: step 2/4. Functionally, involved in the biosynthesis of branched-chain amino acids (BCAA). Catalyzes an alkyl-migration followed by a ketol-acid reduction of (S)-2-acetolactate (S2AL) to yield (R)-2,3-dihydroxy-isovalerate. In the isomerase reaction, S2AL is rearranged via a Mg-dependent methyl migration to produce 3-hydroxy-3-methyl-2-ketobutyrate (HMKB). In the reductase reaction, this 2-ketoacid undergoes a metal-dependent reduction by NADPH to yield (R)-2,3-dihydroxy-isovalerate. The chain is Ketol-acid reductoisomerase (NADP(+)) from Paracoccus denitrificans (strain Pd 1222).